Here is a 463-residue protein sequence, read N- to C-terminus: Succinate--CoA ligase [ADP-forming] subunit beta, mitochondrial (463 aa).

The transit peptide at 1–52 directs the protein to the mitochondrion; that stretch reads MAASMFYGRLVAVATLRNHRPRTAQRAAAQVLGSSGLFNNHGLQVQQQQQRN. An ATP-grasp domain is found at 61 to 288; the sequence is MELLQEAGVS…SNSAYRQKKI (228 aa). An N6-acetyllysine modification is found at lysine 78. A Phosphotyrosine modification is found at tyrosine 84. Residue lysine 88 is modified to N6-acetyllysine; alternate. Lysine 88 bears the N6-succinyllysine; alternate mark. Residues lysine 98 and 105-107 contribute to the ATP site; that span reads GRG. Residues lysine 129, lysine 139, lysine 143, and lysine 216 each carry the N6-acetyllysine modification. 2 residues coordinate Mg(2+): asparagine 258 and aspartate 272. At serine 279 the chain carries Phosphoserine. Asparagine 323 lines the substrate pocket. The residue at position 341 (threonine 341) is a Phosphothreonine. At lysine 368 the chain carries N6-acetyllysine. 380-382 contributes to the substrate binding site; that stretch reads GIM.

The protein belongs to the succinate/malate CoA ligase beta subunit family. ATP-specific subunit beta subfamily. In terms of assembly, heterodimer of an alpha and a beta subunit. The beta subunit determines specificity for ATP. Interacts with ALAS2. Mg(2+) serves as cofactor. As to expression, widely expressed. Not expressed in liver and lung.

It localises to the mitochondrion. It carries out the reaction succinate + ATP + CoA = succinyl-CoA + ADP + phosphate. Its pathway is carbohydrate metabolism; tricarboxylic acid cycle; succinate from succinyl-CoA (ligase route): step 1/1. Its activity is regulated as follows. Inhibited by itaconate. Its function is as follows. ATP-specific succinyl-CoA synthetase functions in the citric acid cycle (TCA), coupling the hydrolysis of succinyl-CoA to the synthesis of ATP and thus represents the only step of substrate-level phosphorylation in the TCA. The beta subunit provides nucleotide specificity of the enzyme and binds the substrate succinate, while the binding sites for coenzyme A and phosphate are found in the alpha subunit. In Homo sapiens (Human), this protein is Succinate--CoA ligase [ADP-forming] subunit beta, mitochondrial.